The following is a 419-amino-acid chain: L-rhamnose isomerase (419 aa).

The Mn(2+) site is built by histidine 262, aspartate 294, and aspartate 296.

Belongs to the rhamnose isomerase family. Homotetramer. Requires Mn(2+) as cofactor.

It localises to the cytoplasm. The enzyme catalyses L-rhamnopyranose = L-rhamnulose. The protein operates within carbohydrate degradation; L-rhamnose degradation; glycerone phosphate from L-rhamnose: step 1/3. Its function is as follows. Catalyzes the interconversion of L-rhamnose and L-rhamnulose. The chain is L-rhamnose isomerase from Shigella flexneri serotype 5b (strain 8401).